The following is a 296-amino-acid chain: Arginine/serine-rich protein 1 (296 aa).

The disordered stretch occupies residues 1-131 (MSNYVNDMWP…RSRSRSRERS (131 aa)). Ser-12 is subject to Phosphoserine. Residues 20–31 (SASRSGGSSRLS) show a composition bias toward low complexity. Residues 32 to 125 (SRSRSRSFSR…RSRSRSRSRS (94 aa)) are compositionally biased toward basic residues. Phosphoserine occurs at positions 111 and 113. Arg-141 carries the omega-N-methylarginine modification. The span at 156–165 (ERSRWRDRSR) shows a compositional bias: basic and acidic residues. Disordered regions lie at residues 156–175 (ERSR…TPFR) and 217–296 (SHGI…WIPV). Positions 245 to 261 (EKPSQQRSIAFSSNNSV) are enriched in polar residues. The segment covering 272–287 (ATEETSSRSPKIDKKK) has biased composition (basic and acidic residues). Position 280 is a phosphoserine (Ser-280).

The protein belongs to the RSRP family. In terms of processing, phosphorylated. Phosphorylation at Ser-111 and Ser-113 mediates the interaction with spliceosome proteins.

Its subcellular location is the nucleus. In terms of biological role, probably acts as a spliceosomal factor that contributes to spliceosome assembly and regulates the isoform switching of proteins such as PARP6. This is Arginine/serine-rich protein 1 (RSRP1) from Macaca fascicularis (Crab-eating macaque).